Here is a 119-residue protein sequence, read N- to C-terminus: MSQFNAYHKNARISAQKVRLVADLVRGMFADEALDTLKYQPQRGARMLEKVIKSAVGNAQDPDQNSGRSHRIEELVITDVRVDGGPMFKRIQPRARGMAFMIKKRSSHIRVGLTHIENV.

Belongs to the universal ribosomal protein uL22 family. In terms of assembly, part of the 50S ribosomal subunit.

This protein binds specifically to 23S rRNA; its binding is stimulated by other ribosomal proteins, e.g. L4, L17, and L20. It is important during the early stages of 50S assembly. It makes multiple contacts with different domains of the 23S rRNA in the assembled 50S subunit and ribosome. In terms of biological role, the globular domain of the protein is located near the polypeptide exit tunnel on the outside of the subunit, while an extended beta-hairpin is found that lines the wall of the exit tunnel in the center of the 70S ribosome. This Rhodopirellula baltica (strain DSM 10527 / NCIMB 13988 / SH1) protein is Large ribosomal subunit protein uL22.